Reading from the N-terminus, the 83-residue chain is Mu-theraphotoxin-Hhn2c (83 aa).

An N-terminal signal peptide occupies residues 1 to 21 (MKASMFLALAGLVLLFVVGYA). The propeptide occupies 22–48 (SESEEKEFPIELLSKIFAVDVFKGEER). 3 cysteine pairs are disulfide-bonded: cysteine 50–cysteine 65, cysteine 57–cysteine 70, and cysteine 64–cysteine 77. Residue leucine 81 is modified to Leucine amide.

This sequence belongs to the neurotoxin 10 (Hwtx-1) family. 15 (Hntx-3) subfamily. As to quaternary structure, monomer. In terms of tissue distribution, expressed by the venom gland.

The protein localises to the secreted. Its function is as follows. Lethal neurotoxin. Selectively blocks tetrodotoxin-sensitive voltage-gated sodium channels (Nav). Does not affect tetrodotoxin-resistant voltage-gated sodium channels or calcium channels. The chain is Mu-theraphotoxin-Hhn2c from Cyriopagopus hainanus (Chinese bird spider).